A 298-amino-acid polypeptide reads, in one-letter code: Cyclin-dependent kinase 2 homolog (298 aa).

Residues 4–284 (YHKMEKIGEG…AKEALKHDYF (281 aa)) form the Protein kinase domain. ATP contacts are provided by residues 10 to 18 (IGEGTYGVV) and Lys32. Residue Thr14 is modified to Phosphothreonine. At Tyr15 the chain carries Phosphotyrosine. Asp125 (proton acceptor) is an active-site residue. Thr158 carries the post-translational modification Phosphothreonine.

It belongs to the protein kinase superfamily. CMGC Ser/Thr protein kinase family. CDC2/CDKX subfamily. As to quaternary structure, may form a complex composed of at least the catalytic subunit CRK2 and a cyclin. Requires Mg(2+) as cofactor.

Its subcellular location is the cytoplasm. The catalysed reaction is L-seryl-[protein] + ATP = O-phospho-L-seryl-[protein] + ADP + H(+). It carries out the reaction L-threonyl-[protein] + ATP = O-phospho-L-threonyl-[protein] + ADP + H(+). It catalyses the reaction [DNA-directed RNA polymerase] + ATP = phospho-[DNA-directed RNA polymerase] + ADP + H(+). With respect to regulation, phosphorylation at Thr-14 or Tyr-15 inactivates the enzyme, while phosphorylation at Thr-158 activates it. In terms of biological role, serine/threonine-protein kinase. Involved in the control of the cell cycle. Required for entry into S-phase and mitosis. Probable component of the kinase complex that phosphorylates the repetitive C-terminus of RNA polymerase II. This is Cyclin-dependent kinase 2 homolog from Theileria annulata.